The sequence spans 683 residues: Pre-mRNA-splicing factor CLF1 (683 aa).

13 HAT repeats span residues 40 to 72 (DWQRRKRSEFEEALKRNRLDVRQWLRYAAFEYE), 74 to 106 (RDMRRARSVFERALAVAPGDVVVWLRYVDCELR), 108 to 140 (RDVNHARNLLVRATALLPRVDKLWYKYVLMEES), 142 to 173 (GQVELVRGVYTKWCTLEPAAAAWDAFVDFETR), 175 to 206 (GQVEHVREVYSRYVMVHPVAATWLKWVAFERK), 291 to 323 (SILFKRKREYEEQLLAHPLDYDAWWLYLDLLEE), 336 to 367 (ATVKAVPRSQEKDMQWRKYVNLWLRYLLFLET), 374 to 407 (LTRSMYQKLVREVIPNTKFTFAKAWIMYAEFEIR), 409 to 440 (EKLDKARKILGMSLGMCPKPKLFQYYIDLEIK), 442 to 474 (KEFDRVRRLHEKLLEFQPDVLSNWIEYAELEEN), 476 to 513 (GDEDRARGIYEIGLTADGGLSQARQLQLMQRYIQFETD), 515 to 547 (SEFERARALYSRYVALSGYDPNVWISCALYESS), and 582 to 620 (ENKEQTRAIFEKALRHYTSEKDDEGRILVLQAYKDYESI).

It belongs to the crooked-neck family. In terms of assembly, associated with the spliceosome.

It is found in the nucleus. Functionally, involved in pre-mRNA splicing and cell cycle progression. Required for the spliceosome assembly and initiation of the DNA replication. This is Pre-mRNA-splicing factor CLF1 (CLF1) from Eremothecium gossypii (strain ATCC 10895 / CBS 109.51 / FGSC 9923 / NRRL Y-1056) (Yeast).